The sequence spans 455 residues: 1,4-beta-D-glucan cellobiohydrolase C (455 aa).

The N-terminal stretch at 1-19 is a signal peptide; it reads MHYSASGLALAFLLPAIQA. One can recognise a CBM1 domain in the interval 20 to 55; it reads QQTLYGQCGGSGWTGATSCVAGAACSTLNQWYAQCL. 2 disulfides stabilise this stretch: Cys27–Cys44 and Cys38–Cys54. The segment at 59–92 is thr-rich linker; sequence TTTSTTLTTTTSSVTTTSNPGSTTTTSSVTVTAT. Positions 66-86 are disordered; sequence TTTTSSVTTTSNPGSTTTTSS. The tract at residues 93–450 is catalytic; the sequence is ASGNPFSGYQ…QAYFVQLLQN (358 aa). Asp185 is a catalytic residue. Disulfide bonds link Cys186–Cys245 and Cys377–Cys424. Asp231 (proton donor) is an active-site residue. Catalysis depends on Asp410, which acts as the Nucleophile.

It belongs to the glycosyl hydrolase 6 (cellulase B) family.

The protein localises to the secreted. The catalysed reaction is Hydrolysis of (1-&gt;4)-beta-D-glucosidic linkages in cellulose and cellotetraose, releasing cellobiose from the non-reducing ends of the chains.. The biological conversion of cellulose to glucose generally requires three types of hydrolytic enzymes: (1) Endoglucanases which cut internal beta-1,4-glucosidic bonds; (2) Exocellobiohydrolases that cut the disaccharide cellobiose from the non-reducing end of the cellulose polymer chain; (3) Beta-1,4-glucosidases which hydrolyze the cellobiose and other short cello-oligosaccharides to glucose. Active against carboxymethylcellulose, beta-glucan and lichenan. The protein is 1,4-beta-D-glucan cellobiohydrolase C (cbhC) of Emericella nidulans (strain FGSC A4 / ATCC 38163 / CBS 112.46 / NRRL 194 / M139) (Aspergillus nidulans).